We begin with the raw amino-acid sequence, 292 residues long: Inositol monophosphatase 2 (292 aa).

Residues Glu75, Asp94, Ile96, Asp97, and Asp231 each contribute to the Mg(2+) site. Glu75 provides a ligand contact to substrate. Substrate-binding positions include 96–99 (IDGT) and Asp231.

Belongs to the inositol monophosphatase superfamily. Mg(2+) is required as a cofactor.

It catalyses the reaction a myo-inositol phosphate + H2O = myo-inositol + phosphate. Its pathway is polyol metabolism; myo-inositol biosynthesis; myo-inositol from D-glucose 6-phosphate: step 2/2. Its activity is regulated as follows. Inhibited by Li(+) and Na(+). Functionally, responsible for the provision of inositol required for synthesis of phosphatidylinositol and polyphosphoinositides and involved in the inositol cycle of calcium signaling. In Saccharomyces cerevisiae (strain ATCC 204508 / S288c) (Baker's yeast), this protein is Inositol monophosphatase 2 (INM2).